Consider the following 438-residue polypeptide: Histidinol dehydrogenase (438 aa).

NAD(+) contacts are provided by tyrosine 137, glutamine 198, and asparagine 221. Residues serine 244, glutamine 266, and histidine 269 each coordinate substrate. Residues glutamine 266 and histidine 269 each coordinate Zn(2+). Active-site proton acceptor residues include glutamate 334 and histidine 335. 4 residues coordinate substrate: histidine 335, aspartate 368, glutamate 422, and histidine 427. Residue aspartate 368 coordinates Zn(2+). Position 427 (histidine 427) interacts with Zn(2+).

This sequence belongs to the histidinol dehydrogenase family. Zn(2+) is required as a cofactor.

The catalysed reaction is L-histidinol + 2 NAD(+) + H2O = L-histidine + 2 NADH + 3 H(+). The protein operates within amino-acid biosynthesis; L-histidine biosynthesis; L-histidine from 5-phospho-alpha-D-ribose 1-diphosphate: step 9/9. Catalyzes the sequential NAD-dependent oxidations of L-histidinol to L-histidinaldehyde and then to L-histidine. In Aromatoleum aromaticum (strain DSM 19018 / LMG 30748 / EbN1) (Azoarcus sp. (strain EbN1)), this protein is Histidinol dehydrogenase.